The sequence spans 125 residues: Fluoride-specific ion channel FluC (125 aa).

Transmembrane regions (helical) follow at residues 4-24, 32-52, 67-87, and 100-120; these read LMLV…TVTA, AFPW…GLLV, LLLA…SLDV, and LAYV…GLWL. Na(+)-binding residues include Gly75 and Thr78.

This sequence belongs to the fluoride channel Fluc/FEX (TC 1.A.43) family.

It is found in the cell inner membrane. The catalysed reaction is fluoride(in) = fluoride(out). With respect to regulation, na(+) is not transported, but it plays an essential structural role and its presence is essential for fluoride channel function. Its function is as follows. Fluoride-specific ion channel. Important for reducing fluoride concentration in the cell, thus reducing its toxicity. The protein is Fluoride-specific ion channel FluC of Chelativorans sp. (strain BNC1).